Here is a 271-residue protein sequence, read N- to C-terminus: Bifunctional protein FolD (271 aa).

Residues 154-156 (GRS), Ser-181, and Ile-222 each bind NADP(+).

This sequence belongs to the tetrahydrofolate dehydrogenase/cyclohydrolase family. In terms of assembly, homodimer.

The enzyme catalyses (6R)-5,10-methylene-5,6,7,8-tetrahydrofolate + NADP(+) = (6R)-5,10-methenyltetrahydrofolate + NADPH. The catalysed reaction is (6R)-5,10-methenyltetrahydrofolate + H2O = (6R)-10-formyltetrahydrofolate + H(+). It functions in the pathway one-carbon metabolism; tetrahydrofolate interconversion. In terms of biological role, catalyzes the oxidation of 5,10-methylenetetrahydrofolate to 5,10-methenyltetrahydrofolate and then the hydrolysis of 5,10-methenyltetrahydrofolate to 10-formyltetrahydrofolate. The chain is Bifunctional protein FolD from Thermotoga sp. (strain RQ2).